The primary structure comprises 264 residues: Type III pantothenate kinase (264 aa).

Residue Asp6–Glu13 coordinates ATP. Gly109 to Arg112 is a substrate binding site. Asp111 serves as the catalytic Proton acceptor. Asp131 serves as a coordination point for K(+). Thr134 provides a ligand contact to ATP. Thr185 contributes to the substrate binding site.

This sequence belongs to the type III pantothenate kinase family. As to quaternary structure, homodimer. NH4(+) serves as cofactor. The cofactor is K(+).

The protein localises to the cytoplasm. It carries out the reaction (R)-pantothenate + ATP = (R)-4'-phosphopantothenate + ADP + H(+). It participates in cofactor biosynthesis; coenzyme A biosynthesis; CoA from (R)-pantothenate: step 1/5. Its function is as follows. Catalyzes the phosphorylation of pantothenate (Pan), the first step in CoA biosynthesis. In Nocardia farcinica (strain IFM 10152), this protein is Type III pantothenate kinase.